The chain runs to 156 residues: Small ribosomal subunit protein uS7 (156 aa).

It belongs to the universal ribosomal protein uS7 family. As to quaternary structure, part of the 30S ribosomal subunit. Contacts proteins S9 and S11.

In terms of biological role, one of the primary rRNA binding proteins, it binds directly to 16S rRNA where it nucleates assembly of the head domain of the 30S subunit. Is located at the subunit interface close to the decoding center, probably blocks exit of the E-site tRNA. The sequence is that of Small ribosomal subunit protein uS7 from Pseudomonas fluorescens (strain ATCC BAA-477 / NRRL B-23932 / Pf-5).